A 308-amino-acid chain; its full sequence is HTH-type transcriptional activator AllS (308 aa).

Residues 2–59 (FDPETLRTFIAVAETGSFSKAAERLCKTTATISYRIKLLEENTGVALFFRTTRSVTLT) enclose the HTH lysR-type domain. A DNA-binding region (H-T-H motif) is located at residues 19 to 38 (FSKAAERLCKTTATISYRIK).

This sequence belongs to the LysR transcriptional regulatory family.

Its function is as follows. Positive regulator essential for the expression of allD operon. Binds to the allD promoter. The protein is HTH-type transcriptional activator AllS (allS) of Escherichia coli O6:K15:H31 (strain 536 / UPEC).